The chain runs to 271 residues: 3-methyl-2-oxobutanoate hydroxymethyltransferase (271 aa).

The Mg(2+) site is built by Asp51 and Asp90. 3-methyl-2-oxobutanoate-binding positions include 51-52 (DS), Asp90, and Lys118. Glu120 lines the Mg(2+) pocket. The Proton acceptor role is filled by Glu186.

This sequence belongs to the PanB family. Homodecamer; pentamer of dimers. It depends on Mg(2+) as a cofactor.

It is found in the cytoplasm. It catalyses the reaction 3-methyl-2-oxobutanoate + (6R)-5,10-methylene-5,6,7,8-tetrahydrofolate + H2O = 2-dehydropantoate + (6S)-5,6,7,8-tetrahydrofolate. Its pathway is cofactor biosynthesis; (R)-pantothenate biosynthesis; (R)-pantoate from 3-methyl-2-oxobutanoate: step 1/2. Its function is as follows. Catalyzes the reversible reaction in which hydroxymethyl group from 5,10-methylenetetrahydrofolate is transferred onto alpha-ketoisovalerate to form ketopantoate. The chain is 3-methyl-2-oxobutanoate hydroxymethyltransferase from Xanthomonas campestris pv. campestris (strain 8004).